Reading from the N-terminus, the 405-residue chain is Arginine deiminase (405 aa).

Catalysis depends on C395, which acts as the Amidino-cysteine intermediate.

The protein belongs to the arginine deiminase family.

It localises to the cytoplasm. The enzyme catalyses L-arginine + H2O = L-citrulline + NH4(+). The protein operates within amino-acid degradation; L-arginine degradation via ADI pathway; carbamoyl phosphate from L-arginine: step 1/2. The chain is Arginine deiminase from Rhodococcus jostii (strain RHA1).